Consider the following 309-residue polypeptide: Homoserine O-succinyltransferase (309 aa).

C142 functions as the Acyl-thioester intermediate in the catalytic mechanism. K163 and S192 together coordinate substrate. The active-site Proton acceptor is H235. E237 is an active-site residue. R249 serves as a coordination point for substrate.

This sequence belongs to the MetA family.

The protein localises to the cytoplasm. The enzyme catalyses L-homoserine + succinyl-CoA = O-succinyl-L-homoserine + CoA. It participates in amino-acid biosynthesis; L-methionine biosynthesis via de novo pathway; O-succinyl-L-homoserine from L-homoserine: step 1/1. Functionally, transfers a succinyl group from succinyl-CoA to L-homoserine, forming succinyl-L-homoserine. This is Homoserine O-succinyltransferase from Enterobacter sp. (strain 638).